Reading from the N-terminus, the 471-residue chain is Acetylcholinesterase collagenic tail peptide (471 aa).

An N-terminal signal peptide occupies residues 1 to 30; the sequence is MLGILLQKATATLASGLNSSRAGMFPIALG. The PRAD stretch occupies residues 70 to 86; that stretch reads CCLLTPPPPPMFPPPFF. 2 consecutive Collagen-like domains span residues 118-282 and 293-307; these read GPPG…SGLP and GPKG…VGRC. Disordered stretches follow at residues 140 to 205 and 237 to 267; these read EIGE…GEKG and KGVS…IGPP. Low complexity-rich tracts occupy residues 155–164 and 242–251; these read VRGPRGMPGS and APGHRGPVGR. Repeat copies occupy residues 388 to 413 and 420 to 443. Residues 388–443 are 2 X 26 AA approximate repeats; the sequence is FCGDEIVQVENGEECDDGNRIVTDSCINCKQAYCGDGYLQSGLEECDGKDFGYHTC.

It belongs to the COLQ family. As to quaternary structure, the asymmetric form of AChE is a disulfide-bonded oligomer composed of a collagenic subunit (Q) and a variable number of asymmetric (T) catalytic subunits. The N-terminal of the collagenic subunit (Q) associates with the C-terminal of the catalytic subunit (T). As to expression, expressed in electric organs but not in muscle.

Its subcellular location is the synapse. Anchors the catalytic subunits of asymmetric AChE to the synaptic basal lamina. This is Acetylcholinesterase collagenic tail peptide from Torpedo marmorata (Marbled electric ray).